The primary structure comprises 94 residues: MKYPKQIRTYCPFCKKHTIHKVERVKKRPRSELSAGQRRFRRILKGYGGFPRPKPEGREKPVKKLDLRFRCTECGKAHTRGRGFRVKKFELVEG.

4 residues coordinate Zn(2+): Cys11, Cys14, Cys71, and Cys74. The C4-type zinc-finger motif lies at 11–74 (CPFCKKHTIH…LDLRFRCTEC (64 aa)).

The protein belongs to the eukaryotic ribosomal protein eL42 family. In terms of assembly, part of the 50S ribosomal subunit. Zn(2+) is required as a cofactor.

Its function is as follows. Binds to the 23S rRNA. This chain is Large ribosomal subunit protein eL42, found in Pyrococcus furiosus (strain ATCC 43587 / DSM 3638 / JCM 8422 / Vc1).